Consider the following 526-residue polypeptide: Bifunctional purine biosynthesis protein PurH (526 aa).

Residues 1-148 (MQRPIIIRRA…KNYSNVVVVV (148 aa)) form the MGS-like domain.

It belongs to the PurH family.

The catalysed reaction is (6R)-10-formyltetrahydrofolate + 5-amino-1-(5-phospho-beta-D-ribosyl)imidazole-4-carboxamide = 5-formamido-1-(5-phospho-D-ribosyl)imidazole-4-carboxamide + (6S)-5,6,7,8-tetrahydrofolate. It catalyses the reaction IMP + H2O = 5-formamido-1-(5-phospho-D-ribosyl)imidazole-4-carboxamide. Its pathway is purine metabolism; IMP biosynthesis via de novo pathway; 5-formamido-1-(5-phospho-D-ribosyl)imidazole-4-carboxamide from 5-amino-1-(5-phospho-D-ribosyl)imidazole-4-carboxamide (10-formyl THF route): step 1/1. It participates in purine metabolism; IMP biosynthesis via de novo pathway; IMP from 5-formamido-1-(5-phospho-D-ribosyl)imidazole-4-carboxamide: step 1/1. The sequence is that of Bifunctional purine biosynthesis protein PurH from Baumannia cicadellinicola subsp. Homalodisca coagulata.